Reading from the N-terminus, the 202-residue chain is Superoxide dismutase [Mn] (202 aa).

Residues histidine 27, histidine 82, aspartate 164, and histidine 168 each contribute to the Mn(2+) site.

The protein belongs to the iron/manganese superoxide dismutase family. In terms of assembly, homodimer. Mn(2+) serves as cofactor.

It carries out the reaction 2 superoxide + 2 H(+) = H2O2 + O2. Its function is as follows. Destroys superoxide anion radicals which are normally produced within the cells and which are toxic to biological systems. The protein is Superoxide dismutase [Mn] (sodA) of Listeria monocytogenes serovar 1/2a (strain ATCC BAA-679 / EGD-e).